A 313-amino-acid chain; its full sequence is Ornithine carbamoyltransferase (313 aa).

Residues 57–60, R108, and 135–138 contribute to the carbamoyl phosphate site; these read STRT and HPTQ. Residues N167, D231, and 235–236 contribute to the L-ornithine site; that span reads SM. Carbamoyl phosphate is bound by residues 272 to 273 and R300; that span reads CL.

Belongs to the aspartate/ornithine carbamoyltransferase superfamily. OTCase family.

It is found in the cytoplasm. It carries out the reaction carbamoyl phosphate + L-ornithine = L-citrulline + phosphate + H(+). It functions in the pathway amino-acid biosynthesis; L-arginine biosynthesis; L-arginine from L-ornithine and carbamoyl phosphate: step 1/3. Reversibly catalyzes the transfer of the carbamoyl group from carbamoyl phosphate (CP) to the N(epsilon) atom of ornithine (ORN) to produce L-citrulline. The sequence is that of Ornithine carbamoyltransferase from Thermotoga petrophila (strain ATCC BAA-488 / DSM 13995 / JCM 10881 / RKU-1).